Reading from the N-terminus, the 452-residue chain is Diphthine methyltransferase (452 aa).

7 WD repeats span residues 79-130 (PLVE…SHVL), 131-185 (EPLS…RPRL), 186-229 (QKVA…RVPG), 230-273 (KFLF…RNMK), 274-313 (QPLA…LNCQ), 314-403 (KAME…TEGM), and 404-448 (RKNG…HLWE). S353 carries the post-translational modification Phosphoserine. The disordered stretch occupies residues 371–402 (SELPTPCHECREDNDGEGHARPQSGMKPLTEG). Residues 378-390 (HECREDNDGEGHA) are compositionally biased toward basic and acidic residues.

It belongs to the DPH7 family. As to quaternary structure, interacts with INCA1.

The enzyme catalyses diphthine methyl ester-[translation elongation factor 2] + H2O = diphthine-[translation elongation factor 2] + methanol + H(+). Its pathway is protein modification; peptidyl-diphthamide biosynthesis. Functionally, catalyzes the demethylation of diphthine methyl ester to form diphthine, an intermediate diphthamide biosynthesis, a post-translational modification of histidine which occurs in translation elongation factor 2 (EEF2) which can be ADP-ribosylated by diphtheria toxin and by Pseudomonas exotoxin A (Eta). The sequence is that of Diphthine methyltransferase (DPH7) from Homo sapiens (Human).